Here is a 168-residue protein sequence, read N- to C-terminus: MKSLNRQTVSRFKKLSVPAAIMMILSTIISGIGTFLHYKEELMPSACANGWIQYDKHCYLDTNIKMSTDNAVYQCRKLRARLPRPDTRHLRVLFSIFYKDYWVSLKKTNDKWLDINNDKDIDISKLTNFKQLNSTTDAEACYIYKSGKLVKTVCKSTQSVLCVKKFYK.

Residues 1–14 (MKSLNRQTVSRFKK) lie on the Intravirion side of the membrane. The helical transmembrane segment at 15 to 37 (LSVPAAIMMILSTIISGIGTFLH) threads the bilayer. Residues 38-168 (YKEELMPSAC…SVLCVKKFYK (131 aa)) are Virion surface-facing. The C-type lectin domain occupies 54-163 (YDKHCYLDTN…CKSTQSVLCV (110 aa)). 2 disulfide bridges follow: cysteine 75-cysteine 162 and cysteine 141-cysteine 154. An N-linked (GlcNAc...) asparagine; by host glycan is attached at asparagine 133.

The protein belongs to the orthopoxvirus OPG162 protein family. Interacts with protein OPG161. Interacts with protein OPG164. Interacts with protein OPG190.

It is found in the virion membrane. The protein localises to the host Golgi apparatus. In terms of biological role, forms a complex with OPG162 and OPG190 to coordinate the incorporation of OPG164 into wrapped enveloped virion (EV) membranes and, subsequently, the production of actin tails. Therefore plays an essential role in efficient cell-to-cell spread of viral particles. This Vaccinia virus (strain Western Reserve) (VACV) protein is Protein OPG162 (OPG162).